We begin with the raw amino-acid sequence, 596 residues long: Elongation factor 4 (596 aa).

The tr-type G domain occupies 2–184; it reads KHIRNFSIIA…TIVAQIPSPE (183 aa). Residues 14-19 and 131-134 contribute to the GTP site; these read DHGKST and NKID.

It belongs to the TRAFAC class translation factor GTPase superfamily. Classic translation factor GTPase family. LepA subfamily.

It localises to the cell inner membrane. The catalysed reaction is GTP + H2O = GDP + phosphate + H(+). Functionally, required for accurate and efficient protein synthesis under certain stress conditions. May act as a fidelity factor of the translation reaction, by catalyzing a one-codon backward translocation of tRNAs on improperly translocated ribosomes. Back-translocation proceeds from a post-translocation (POST) complex to a pre-translocation (PRE) complex, thus giving elongation factor G a second chance to translocate the tRNAs correctly. Binds to ribosomes in a GTP-dependent manner. This Shewanella amazonensis (strain ATCC BAA-1098 / SB2B) protein is Elongation factor 4.